The chain runs to 1217 residues: WD repeat-containing protein on Y chromosome (1217 aa).

8 WD repeats span residues 155–199, 323–362, 366–405, 456–495, 508–547, 595–635, 740–779, and 823–862; these read EDMT…LRSA, RIPL…EPSA, GHNG…LLQT, THAA…RKII, TIDI…VVRN, FHTD…RRYN, KVGD…IPEA, and GHLK…LGTL. Disordered regions lie at residues 910-929 and 1033-1217; these read QVKR…VEDT and AGGQ…KDKP. Over residues 919–929 the composition is skewed to acidic residues; that stretch reads EREDEGEVEDT. Composition is skewed to polar residues over residues 1041-1054, 1085-1107, and 1137-1179; these read RASS…TNSI, FGPN…SQLK, and PVST…TSAN. Positions 1181-1190 are enriched in low complexity; the sequence is KPDIMPVKIK. Residues 1198-1210 are compositionally biased toward polar residues; the sequence is RNTAPVQITTSIA.

The chain is WD repeat-containing protein on Y chromosome from Drosophila mojavensis (Fruit fly).